A 2386-amino-acid polypeptide reads, in one-letter code: Protein kinase rad3 (2386 aa).

The 558-residue stretch at 1386 to 1943 folds into the FAT domain; the sequence is TLGIVSLNCG…LWQLMATIKS (558 aa). The PI3K/PI4K catalytic domain maps to 2052–2370; sequence FEDEVDIMNS…QIQELIKSAV (319 aa). The tract at residues 2058 to 2064 is G-loop; the sequence is IMNSLQK. Residues 2227–2235 are catalytic loop; sequence GLGDRHGEN. The interval 2247 to 2271 is activation loop; the sequence is HVDFNCLFDKGLTFEKPEKVPFRLT. One can recognise an FATC domain in the interval 2354 to 2386; that stretch reads IPLSIEGQIQELIKSAVNPKNLVEMYIGWAAYF.

It belongs to the PI3/PI4-kinase family. ATM subfamily. In terms of assembly, interacts with crb2 (via BRCT domain). Interacts with chk1.

It localises to the nucleus. It catalyses the reaction L-seryl-[protein] + ATP = O-phospho-L-seryl-[protein] + ADP + H(+). The catalysed reaction is L-threonyl-[protein] + ATP = O-phospho-L-threonyl-[protein] + ADP + H(+). Serine/threonine kinase which activates checkpoint signaling upon genotoxic stresses. Involved in G2 arrest following DNA damage where it phosphorylates chk1. Phosphorylation of 'Thr-73' and 'Ser-80' of checkpoint mediator crb2 promotes its interaction with chk1. It is also involved in the dependence of mitosis on the completion of DNA replication. In Schizosaccharomyces pombe (strain 972 / ATCC 24843) (Fission yeast), this protein is Protein kinase rad3 (rad3).